The chain runs to 339 residues: Ketol-acid reductoisomerase (NADP(+)) (339 aa).

The KARI N-terminal Rossmann domain maps to 1–182 (MRVYYDRDAD…GGGRAGIIET (182 aa)). NADP(+) contacts are provided by residues 24–27 (YGSQ), arginine 48, serine 51, and 83–86 (DEGQ). Residue histidine 108 is part of the active site. Glycine 134 serves as a coordination point for NADP(+). One can recognise a KARI C-terminal knotted domain in the interval 183-328 (SFKEEVETDL…EKLRGMMPWI (146 aa)). Positions 191, 195, 227, and 231 each coordinate Mg(2+). Residue serine 252 coordinates substrate.

It belongs to the ketol-acid reductoisomerase family. The cofactor is Mg(2+).

The catalysed reaction is (2R)-2,3-dihydroxy-3-methylbutanoate + NADP(+) = (2S)-2-acetolactate + NADPH + H(+). It carries out the reaction (2R,3R)-2,3-dihydroxy-3-methylpentanoate + NADP(+) = (S)-2-ethyl-2-hydroxy-3-oxobutanoate + NADPH + H(+). The protein operates within amino-acid biosynthesis; L-isoleucine biosynthesis; L-isoleucine from 2-oxobutanoate: step 2/4. Its pathway is amino-acid biosynthesis; L-valine biosynthesis; L-valine from pyruvate: step 2/4. In terms of biological role, involved in the biosynthesis of branched-chain amino acids (BCAA). Catalyzes an alkyl-migration followed by a ketol-acid reduction of (S)-2-acetolactate (S2AL) to yield (R)-2,3-dihydroxy-isovalerate. In the isomerase reaction, S2AL is rearranged via a Mg-dependent methyl migration to produce 3-hydroxy-3-methyl-2-ketobutyrate (HMKB). In the reductase reaction, this 2-ketoacid undergoes a metal-dependent reduction by NADPH to yield (R)-2,3-dihydroxy-isovalerate. This Gluconacetobacter diazotrophicus (strain ATCC 49037 / DSM 5601 / CCUG 37298 / CIP 103539 / LMG 7603 / PAl5) protein is Ketol-acid reductoisomerase (NADP(+)).